We begin with the raw amino-acid sequence, 151 residues long: Chromophore lyase CpcS/CpeS homolog (151 aa).

It belongs to the CpcS/CpeS biliprotein lyase family.

It localises to the plastid. The protein resides in the chloroplast. Might function to covalently attach a chromophore to Cys residue(s) of phycobiliproteins. In Gracilaria tenuistipitata var. liui (Red alga), this protein is Chromophore lyase CpcS/CpeS homolog.